A 357-amino-acid polypeptide reads, in one-letter code: Prostaglandin D2 receptor-like (357 aa).

Over 1-20 (MNESYRCQAATWVERGSSAT) the chain is Extracellular. Asn-2 carries N-linked (GlcNAc...) asparagine glycosylation. A helical membrane pass occupies residues 21-41 (MGGVLFSAGLLGNLLALVLLA). At 42 to 57 (RSGLGSCRPGPLHPPP) the chain is on the cytoplasmic side. A helical transmembrane segment spans residues 58 to 78 (SVFYVLVCGLTVTHLLGKCLI). The Extracellular portion of the chain corresponds to 79-106 (SPMVLAAYAQNRSLKELLPASGNQLCEA). Asn-89 carries N-linked (GlcNAc...) asparagine glycosylation. A disulfide bond links Cys-104 and Cys-182. A helical membrane pass occupies residues 107 to 127 (FAFLMSFFGLASTLQLLAMAL). Topologically, residues 128–149 (ECWLSLGHPFFYQRHITARRGV) are cytoplasmic. A helical membrane pass occupies residues 150–170 (LVAPVAGAFSLAFCALPFAGF). The Extracellular portion of the chain corresponds to 171-194 (GKFVQYCPGTWCFIQMIHKKRSFS). The chain crosses the membrane as a helical span at residues 195-215 (VIGFSVLYSSLMALLVLATVV). Topologically, residues 216–261 (CNLGAMSNLYAMHRRQRHHPRRCSRDRAQSGSDYRHGSPNPLEELD) are cytoplasmic. The helical transmembrane segment at 262–282 (HFVLLALTTVLFTMCSLPLIY) threads the bilayer. Residues 283 to 306 (RAYYGAFKLVDRADGDSEDLQALR) lie on the Extracellular side of the membrane. The helical transmembrane segment at 307 to 327 (FLSVISIVDPWIFIIFRTSVF) threads the bilayer. Residues 328-357 (RMLFHKAFTRPLIYRNWCSHSWQTNMESTL) are Cytoplasmic-facing.

This sequence belongs to the G-protein coupled receptor 1 family. In terms of tissue distribution, strongly expressed in eye and gastrointestinal tract (GIT), moderately in the brain and oviduct and weakly in the epididymis. In the eye, expressed in the epithelium of the iris and ciliary body and in photoreceptor cells of the retina. In the brain, expressed in leptomeninges, choroid plexus and spinal cord (sensory and motor neurons of the dorsal and ventral horns). In the stomach, expressed in the mucous-secreting goblet cells and the columnar epithelium. Expressed in platelets.

It localises to the cell membrane. Functionally, receptor for prostaglandin D2 (PGD2). The activity of this receptor is mainly mediated by G(s) proteins that stimulate adenylate cyclase, resulting in an elevation of intracellular cAMP. A mobilization of calcium is also observed, but without formation of inositol 1,4,5-trisphosphate. The chain is Prostaglandin D2 receptor-like (Ptgdrl) from Rattus norvegicus (Rat).